The sequence spans 114 residues: Hydrogenase maturation factor HypA (114 aa).

Residue His2 participates in Ni(2+) binding. Positions 73, 76, 90, and 93 each coordinate Zn(2+).

It belongs to the HypA/HybF family.

Functionally, involved in the maturation of [NiFe] hydrogenases. Required for nickel insertion into the metal center of the hydrogenase. The protein is Hydrogenase maturation factor HypA of Chloroflexus aurantiacus (strain ATCC 29366 / DSM 635 / J-10-fl).